Consider the following 209-residue polypeptide: MICOS complex subunit mic19 (209 aa).

Coiled-coil stretches lie at residues 48 to 86 and 127 to 156; these read LELEIQNRVAKELERLRAREQQTLAEIEKRLSEAKDTGS and EVAAVNKELNRESVNSEIEELRVKLEGRKK.

The protein belongs to the MICOS complex subunit Mic19 family. Component of the mitochondrial contact site and cristae organizing system (MICOS) complex.

It localises to the mitochondrion inner membrane. Functionally, component of the MICOS complex, a large protein complex of the mitochondrial inner membrane that plays crucial roles in the maintenance of crista junctions, inner membrane architecture, and formation of contact sites to the outer membrane. Involved in osmoadaptation. The protein is MICOS complex subunit mic19 of Emericella nidulans (strain FGSC A4 / ATCC 38163 / CBS 112.46 / NRRL 194 / M139) (Aspergillus nidulans).